The sequence spans 41 residues: Photosystem II reaction center protein L (41 aa).

The helical transmembrane segment at 20 to 40 threads the bilayer; sequence SLYWGLLLIFVLAVPFSNYFF.

The protein belongs to the PsbL family. In terms of assembly, PSII is composed of 1 copy each of membrane proteins PsbA, PsbB, PsbC, PsbD, PsbE, PsbF, PsbH, PsbI, PsbJ, PsbK, PsbL, PsbM, PsbT, PsbX, PsbY, PsbZ, Psb30/Ycf12, at least 3 peripheral proteins of the oxygen-evolving complex and a large number of cofactors. It forms dimeric complexes.

The protein resides in the plastid. It localises to the chloroplast thylakoid membrane. One of the components of the core complex of photosystem II (PSII). PSII is a light-driven water:plastoquinone oxidoreductase that uses light energy to abstract electrons from H(2)O, generating O(2) and a proton gradient subsequently used for ATP formation. It consists of a core antenna complex that captures photons, and an electron transfer chain that converts photonic excitation into a charge separation. This subunit is found at the monomer-monomer interface and is required for correct PSII assembly and/or dimerization. This chain is Photosystem II reaction center protein L, found in Pinus koraiensis (Korean pine).